A 122-amino-acid polypeptide reads, in one-letter code: MSTITKDQILEGVAALSVMEIVELISAMEEKFGVSAAAVAAGPAAAVEAAEEQTEFDVVLASFGENKVAVIKAVRGATGLGLKEAKDLVESAPAVLKEGVNKDEAETLKKSLEEAGASVEIK.

This sequence belongs to the bacterial ribosomal protein bL12 family. Homodimer. Part of the ribosomal stalk of the 50S ribosomal subunit. Forms a multimeric L10(L12)X complex, where L10 forms an elongated spine to which 2 to 4 L12 dimers bind in a sequential fashion. Binds GTP-bound translation factors.

Forms part of the ribosomal stalk which helps the ribosome interact with GTP-bound translation factors. Is thus essential for accurate translation. This is Large ribosomal subunit protein bL12 from Yersinia pseudotuberculosis serotype O:1b (strain IP 31758).